The sequence spans 307 residues: Protoheme IX farnesyltransferase (307 aa).

9 helical membrane passes run 31-51, 53-73, 103-123, 125-145, 153-173, 179-199, 223-243, 246-266, and 285-305; these read VTQL…PGMV, WPVL…AFAI, TLVF…VYAN, LTMW…TILL, IVIG…AVAG, AWFL…ALAL, LLHI…PFVY, SGYI…AYAW, and ILYL…KFVP.

Belongs to the UbiA prenyltransferase family. Protoheme IX farnesyltransferase subfamily.

It is found in the cell inner membrane. The enzyme catalyses heme b + (2E,6E)-farnesyl diphosphate + H2O = Fe(II)-heme o + diphosphate. It functions in the pathway porphyrin-containing compound metabolism; heme O biosynthesis; heme O from protoheme: step 1/1. Converts heme B (protoheme IX) to heme O by substitution of the vinyl group on carbon 2 of heme B porphyrin ring with a hydroxyethyl farnesyl side group. This Cupriavidus taiwanensis (strain DSM 17343 / BCRC 17206 / CCUG 44338 / CIP 107171 / LMG 19424 / R1) (Ralstonia taiwanensis (strain LMG 19424)) protein is Protoheme IX farnesyltransferase.